Here is a 37-residue protein sequence, read N- to C-terminus: Chitinase-like protein (37 aa).

The disordered stretch occupies residues 1–20; that stretch reads VLLSVGGDADTESPEKKNLG. A GH18 domain is found at 1–37; it reads VLLSVGGDADTESPEKKNLGGVSIVDLSMDDFRGLLT.

Belongs to the glycosyl hydrolase 18 family. IDGF subfamily. In terms of processing, glycosylated.

The protein resides in the secreted. Its function is as follows. Cooperates with insulin-like peptides to stimulate the proliferation, polarization and motility of imaginal disk cells. May act by stabilizing the binding of insulin-like peptides to its receptor through a simultaneous interaction with both molecules to form a multiprotein signaling complex. This is Chitinase-like protein from Heliothis virescens (Tobacco budworm moth).